The following is a 131-amino-acid chain: Large ribosomal subunit protein bL17 (131 aa).

Belongs to the bacterial ribosomal protein bL17 family. In terms of assembly, part of the 50S ribosomal subunit. Contacts protein L32.

The chain is Large ribosomal subunit protein bL17 from Oenococcus oeni (strain ATCC BAA-331 / PSU-1).